Consider the following 107-residue polypeptide: Nucleoid-associated protein Pnec_0645 (107 aa).

This sequence belongs to the YbaB/EbfC family. As to quaternary structure, homodimer.

The protein resides in the cytoplasm. It is found in the nucleoid. Functionally, binds to DNA and alters its conformation. May be involved in regulation of gene expression, nucleoid organization and DNA protection. This Polynucleobacter necessarius subsp. necessarius (strain STIR1) protein is Nucleoid-associated protein Pnec_0645.